The sequence spans 312 residues: Porphobilinogen deaminase (312 aa).

Cys-243 is subject to S-(dipyrrolylmethanemethyl)cysteine.

It belongs to the HMBS family. As to quaternary structure, monomer. The cofactor is dipyrromethane.

The enzyme catalyses 4 porphobilinogen + H2O = hydroxymethylbilane + 4 NH4(+). Its pathway is porphyrin-containing compound metabolism; protoporphyrin-IX biosynthesis; coproporphyrinogen-III from 5-aminolevulinate: step 2/4. Tetrapolymerization of the monopyrrole PBG into the hydroxymethylbilane pre-uroporphyrinogen in several discrete steps. The protein is Porphobilinogen deaminase of Vibrio vulnificus (strain CMCP6).